We begin with the raw amino-acid sequence, 417 residues long: Serine hydroxymethyltransferase 1 (417 aa).

(6S)-5,6,7,8-tetrahydrofolate is bound by residues Leu-121 and 125–127; that span reads GHL. Residue Lys-230 is modified to N6-(pyridoxal phosphate)lysine. 355 to 357 is a (6S)-5,6,7,8-tetrahydrofolate binding site; that stretch reads SPF.

This sequence belongs to the SHMT family. As to quaternary structure, homodimer. Pyridoxal 5'-phosphate serves as cofactor.

The protein resides in the cytoplasm. The catalysed reaction is (6R)-5,10-methylene-5,6,7,8-tetrahydrofolate + glycine + H2O = (6S)-5,6,7,8-tetrahydrofolate + L-serine. It functions in the pathway one-carbon metabolism; tetrahydrofolate interconversion. The protein operates within amino-acid biosynthesis; glycine biosynthesis; glycine from L-serine: step 1/1. Functionally, catalyzes the reversible interconversion of serine and glycine with tetrahydrofolate (THF) serving as the one-carbon carrier. This reaction serves as the major source of one-carbon groups required for the biosynthesis of purines, thymidylate, methionine, and other important biomolecules. Also exhibits THF-independent aldolase activity toward beta-hydroxyamino acids, producing glycine and aldehydes, via a retro-aldol mechanism. This Pseudomonas aeruginosa (strain ATCC 15692 / DSM 22644 / CIP 104116 / JCM 14847 / LMG 12228 / 1C / PRS 101 / PAO1) protein is Serine hydroxymethyltransferase 1.